Reading from the N-terminus, the 201-residue chain is 3-isopropylmalate dehydratase small subunit (201 aa).

Belongs to the LeuD family. LeuD type 1 subfamily. In terms of assembly, heterodimer of LeuC and LeuD.

The catalysed reaction is (2R,3S)-3-isopropylmalate = (2S)-2-isopropylmalate. It functions in the pathway amino-acid biosynthesis; L-leucine biosynthesis; L-leucine from 3-methyl-2-oxobutanoate: step 2/4. In terms of biological role, catalyzes the isomerization between 2-isopropylmalate and 3-isopropylmalate, via the formation of 2-isopropylmaleate. The sequence is that of 3-isopropylmalate dehydratase small subunit from Roseobacter denitrificans (strain ATCC 33942 / OCh 114) (Erythrobacter sp. (strain OCh 114)).